The chain runs to 66 residues: Large ribosomal subunit protein bL33c (66 aa).

This sequence belongs to the bacterial ribosomal protein bL33 family.

It is found in the plastid. It localises to the chloroplast. The protein is Large ribosomal subunit protein bL33c of Phalaenopsis aphrodite subsp. formosana (Moth orchid).